The chain runs to 380 residues: Succinyl-diaminopimelate desuccinylase (380 aa).

Histidine 69 provides a ligand contact to Zn(2+). Aspartate 71 is an active-site residue. Residue aspartate 102 participates in Zn(2+) binding. Glutamate 135 functions as the Proton acceptor in the catalytic mechanism. The Zn(2+) site is built by glutamate 136, glutamate 164, and histidine 353.

This sequence belongs to the peptidase M20A family. DapE subfamily. As to quaternary structure, homodimer. Zn(2+) is required as a cofactor. Requires Co(2+) as cofactor.

It catalyses the reaction N-succinyl-(2S,6S)-2,6-diaminopimelate + H2O = (2S,6S)-2,6-diaminopimelate + succinate. Its pathway is amino-acid biosynthesis; L-lysine biosynthesis via DAP pathway; LL-2,6-diaminopimelate from (S)-tetrahydrodipicolinate (succinylase route): step 3/3. Its function is as follows. Catalyzes the hydrolysis of N-succinyl-L,L-diaminopimelic acid (SDAP), forming succinate and LL-2,6-diaminopimelate (DAP), an intermediate involved in the bacterial biosynthesis of lysine and meso-diaminopimelic acid, an essential component of bacterial cell walls. This is Succinyl-diaminopimelate desuccinylase from Cereibacter sphaeroides (strain ATCC 17023 / DSM 158 / JCM 6121 / CCUG 31486 / LMG 2827 / NBRC 12203 / NCIMB 8253 / ATH 2.4.1.) (Rhodobacter sphaeroides).